The primary structure comprises 102 residues: Small ribosomal subunit protein uS10 (102 aa).

The protein belongs to the universal ribosomal protein uS10 family. In terms of assembly, part of the 30S ribosomal subunit.

In terms of biological role, involved in the binding of tRNA to the ribosomes. The protein is Small ribosomal subunit protein uS10 of Nitrosomonas eutropha (strain DSM 101675 / C91 / Nm57).